Reading from the N-terminus, the 253-residue chain is Probable U3 small nucleolar RNA-associated protein 11 (253 aa).

Residues 1–26 (MAAAFRKAAKSRQREHRERSQPGFRK) are disordered. Glycyl lysine isopeptide (Lys-Gly) (interchain with G-Cter in SUMO2) cross-links involve residues K74, K83, and K86. T90 carries the post-translational modification Phosphothreonine. Glycyl lysine isopeptide (Lys-Gly) (interchain with G-Cter in SUMO2) cross-links involve residues K103, K120, K143, K144, K180, K211, K218, K235, and K236. S241 bears the Phosphoserine mark. K246 participates in a covalent cross-link: Glycyl lysine isopeptide (Lys-Gly) (interchain with G-Cter in SUMO2).

The protein belongs to the UTP11 family. As to quaternary structure, part of the small subunit (SSU) processome, composed of more than 70 proteins and the RNA chaperone small nucleolar RNA (snoRNA) U3.

It is found in the nucleus. Its subcellular location is the nucleolus. Its function is as follows. Part of the small subunit (SSU) processome, first precursor of the small eukaryotic ribosomal subunit. During the assembly of the SSU processome in the nucleolus, many ribosome biogenesis factors, an RNA chaperone and ribosomal proteins associate with the nascent pre-rRNA and work in concert to generate RNA folding, modifications, rearrangements and cleavage as well as targeted degradation of pre-ribosomal RNA by the RNA exosome. Involved in nucleolar processing of pre-18S ribosomal RNA. This is Probable U3 small nucleolar RNA-associated protein 11 from Homo sapiens (Human).